The following is a 705-amino-acid chain: Polyribonucleotide nucleotidyltransferase (705 aa).

Residues Asp485 and Asp491 each coordinate Mg(2+). Residues 552 to 611 enclose the KH domain; that stretch reads PKVFTMSINPSKIKDVIGAGGKTINKIIDETGVKIDIKEDGSVFVTAEDYESGKKALAMI. The 69-residue stretch at 621–689 folds into the S1 motif domain; sequence GEVYLGKVTK…SMGRVNLSRK (69 aa).

The protein belongs to the polyribonucleotide nucleotidyltransferase family. Requires Mg(2+) as cofactor.

It localises to the cytoplasm. The enzyme catalyses RNA(n+1) + phosphate = RNA(n) + a ribonucleoside 5'-diphosphate. In terms of biological role, involved in mRNA degradation. Catalyzes the phosphorolysis of single-stranded polyribonucleotides processively in the 3'- to 5'-direction. The sequence is that of Polyribonucleotide nucleotidyltransferase from Clostridium novyi (strain NT).